Reading from the N-terminus, the 225-residue chain is 7-cyano-7-deazaguanine synthase (225 aa).

10–20 (FSGGQDSTTLA) serves as a coordination point for ATP. Residues C190, C205, C208, and C211 each contribute to the Zn(2+) site.

It belongs to the QueC family. Zn(2+) is required as a cofactor.

The enzyme catalyses 7-carboxy-7-deazaguanine + NH4(+) + ATP = 7-cyano-7-deazaguanine + ADP + phosphate + H2O + H(+). It participates in purine metabolism; 7-cyano-7-deazaguanine biosynthesis. Catalyzes the ATP-dependent conversion of 7-carboxy-7-deazaguanine (CDG) to 7-cyano-7-deazaguanine (preQ(0)). The protein is 7-cyano-7-deazaguanine synthase of Helicobacter acinonychis (strain Sheeba).